We begin with the raw amino-acid sequence, 449 residues long: Na(+)/H(+) antiporter NhaA 1 (449 aa).

11 helical membrane passes run 32–52, 87–107, 114–134, 145–165, 174–194, 202–222, 233–253, 318–338, 347–367, 382–402, and 417–437; these read IEATSGAVLLLATVVALTLSN, GLMTLFFFIVALEIKREVVLG, MVAFSVVAAAGGMLVPMGLYL, GWGVVMPTDTAFVIGCLALLG, VFLLSLAVVDDLAAILVVAVG, TALALGAVGLVIIRGMALLGV, AIIWLAVNASGIHATIVGVIL, WVAFGVMPLFALANAGVSITI, LAVMAGFVLGKPIGVTAFAWL, WGGLVGGALLTGIGFTMALFI, and LGILAASVVSSVAGLTLLCMF.

It belongs to the NhaA Na(+)/H(+) (TC 2.A.33) antiporter family.

The protein resides in the cell inner membrane. The catalysed reaction is Na(+)(in) + 2 H(+)(out) = Na(+)(out) + 2 H(+)(in). In terms of biological role, na(+)/H(+) antiporter that extrudes sodium in exchange for external protons. The polypeptide is Na(+)/H(+) antiporter NhaA 1 (Acidiphilium cryptum (strain JF-5)).